A 1594-amino-acid polypeptide reads, in one-letter code: MRVKPQGLVVTSSAVCSSPDYLREPKYYPGGPPTPRPLLPTRPPASPPDKAFSTHTFSENPRPPPRRDPSSRRPPVLAKGDDLLPPRAARPVSQAHCPSPAPDNSSLRHWDNGRVNLRPVVQLIDIMKDLTRLSQDLQHSGVHLDCGGLRLSRPPAPPPGDLQYSFFSSPSLANSIRSPEERANPHTKSERPSHPLYEPEPEPRDSPQPGQGHGPGAAATATGLPPEPEPDGPDYSELADADILSELASLTCPEAQLLEAQALEPPSPQPEPQLLDPQPRFLDPQALEPLGEGLELPPLQPLADPLGLPSLTLQALDTLPDSLESQLLDPQALDPLPKLLDVPGRRLEPQQSLGHCQLAEPLRLDLCSPHGPPGPEGHPKYALRRTDRPKILCRRRKAGRGRKADSGPEGRLLPLPMPTGLAAALAEPPPLPPPPPPTLSGPGPVPELEPESSQTPMVPTRKGKCRGVRRMVVKMAKIPVSLGRRNKTTYKVSSLSSSLSVEGKELGLRVSSEPTPLLKMKNNGRNVVVVFPPGEMPIILKRKRGRPPKNLLLGPGKPKEPTVVAAEAATVTAATMAMPEVKKRRRRKQKLASPQPSYAADANDSKAEYSDVLAKLAFLNRQSQCAGRCSPPRCWTPSEPESVHQAPDTQSISQFLHRVQGFRRRGGKTGGFGGRGGGHAAKAARCSFSDFFEGIGKKKKVVAVAAPGLVGPGLTELGHPRKRGRGEVDAVTGKPKRKRRSRKNGTLFPEQVPSGPGFGEAGAEWVGDKGGGWAPHHGHPGGQAGRNCGFQGTEARAFASTGLESGASGRGSYYAGAPSGQTELSQERQNLFTGYFRSLLDSDDSSDLLDFALSASRPESRKASGTYAGPPSSALPAQRGLATFPSRGAKASPVAVGSSGAGADPSFQPVLPSRQTFPPGRATSYGITPATSDCRAAETFPKLAPPPSAVARSPTTHPPANTYPPQYGGYGAGQSVFASAKPFSGQDCANSKDCSFAYGSGNSLPASPSSAHSAGYAPPPTGGPCLPPSKASFFNSSEGGPFSGSAPTPLRCDSRASTVSPGGYMVPKGTTASAASVASSSSSSFQPSPENCRQFVGASQWPFRQGYGGLDWASEAFSQLYNPNFDCHGSEPNVILDISNYTPQKVKQQTAVSETFSESSSDSTQFSQPVGGGGFRRANSEASSSEGQSSLSSLEKLMMDWNEASSAPGYNWNQSVLFQSSSKPGRGRRKKVDLFEASHLGFSTSTSATASGYPSKRSTGPRQPRGGRGSGACSAKKERGGTAAKAKFIPKPQPVNPLFQDSPDLGLDYYSGDSSMSPLPSQSRAFGVGERDPCDFMGPYSMNPSTPSDGTFGQGFHCDSPSLGAAELDGKHFPPLAHPPTVFDAGLQKAYSPTCSPTLGFKEELRPPPSKLTACEPLKHGLQGASLSHAAQAHLSCRDLPLGQPHYDSPSCKGTAYWYPPGSAARSPPYEGKVGSGLLADFLGRTEAVCLSAPHLASPPATPKADKEPLEMARPPGPPRGPAAATAGYGCPLLSDLTLSPVPRDSLLPLQDTAYRYPGFMPQAHPGLGGGPKSGFLGPMAEPHPEDTFTVTSL.

Disordered regions lie at residues 19-111 (PDYL…RHWD), 149-241 (LRLS…LADA), 256-307 (QLLE…DPLG), and 367-464 (CSPH…RKGK). The segment covering 30-47 (GGPPTPRPLLPTRPPASP) has biased composition (pro residues). K79 is modified (N6-acetyllysine). Over residues 165-177 (SFFSSPSLANSIR) the composition is skewed to polar residues. Residues 178–193 (SPEERANPHTKSERPS) show a composition bias toward basic and acidic residues. Residues 228–240 (PEPDGPDYSELAD) show a composition bias toward acidic residues. S267 is modified (phosphoserine). Positions 272–303 (PQLLDPQPRFLDPQALEPLGEGLELPPLQPLA) are enriched in low complexity. Basic residues predominate over residues 391-401 (ILCRRRKAGRG). Residues 395-407 (RRKAGRGRKADSG) constitute a DNA-binding region (a.T hook 1). A compositionally biased stretch (pro residues) spans 427 to 447 (EPPPLPPPPPPTLSGPGPVPE). Positions 541–553 (KRKRGRPPKNLLL) form a DNA-binding region, a.T hook 2. A disordered region spans residues 578 to 604 (MPEVKKRRRRKQKLASPQPSYAADAND). S593 is modified (phosphoserine). K606 is covalently cross-linked (Glycyl lysine isopeptide (Lys-Gly) (interchain with G-Cter in SUMO2)). The disordered stretch occupies residues 714–789 (LTELGHPRKR…PGGQAGRNCG (76 aa)). A compositionally biased stretch (basic residues) spans 734–743 (KPKRKRRSRK). Phosphoserine occurs at positions 825 and 842. Position 887 is an omega-N-methylarginine (R887). S892 is subject to Phosphoserine. The segment at 942–967 (KLAPPPSAVARSPTTHPPANTYPPQY) is disordered. A Phosphoserine modification is found at S1060. 2 disordered regions span residues 1152–1191 (VSET…QSSL) and 1245–1306 (STSA…PDLG). 3 stretches are compositionally biased toward low complexity: residues 1153–1168 (SETF…QFSQ), 1180–1191 (SEASSSEGQSSL), and 1245–1264 (STSA…PRQP). S1180 carries the post-translational modification Phosphoserine. Phosphoserine is present on residues S1315, S1317, and S1392. At T1394 the chain carries Phosphothreonine. Phosphoserine is present on S1396. A Glycyl lysine isopeptide (Lys-Gly) (interchain with G-Cter in SUMO2) cross-link involves residue K1402. Residues 1495–1525 (HLASPPATPKADKEPLEMARPPGPPRGPAAA) form a disordered region. A phosphoserine mark is found at S1498 and S1540.

It is found in the nucleus. It localises to the chromosome. Functionally, transcription factor required for the proper patterning of the epidermis, which plays a key role in early epithelial morphogenesis. Directly binds promoter and enhancer regions and acts by maintaining local enhancer-promoter chromatin architecture. Interacts with many sequence-specific zinc-finger transcription factors and methyl-CpG-binding proteins to regulate the expression of mesoderm genes that wire surface ectoderm stratification. This is Transcription factor Gibbin from Mus musculus (Mouse).